The primary structure comprises 42 residues: Photosystem I reaction center subunit IX (42 aa).

A helical membrane pass occupies residues 7–27 (FLSTAPVLIMALLTFTAGLLI).

Belongs to the PsaJ family.

Its subcellular location is the cellular thylakoid membrane. May help in the organization of the PsaE and PsaF subunits. This chain is Photosystem I reaction center subunit IX, found in Rippkaea orientalis (strain PCC 8801 / RF-1) (Cyanothece sp. (strain PCC 8801)).